We begin with the raw amino-acid sequence, 380 residues long: Endonuclease III homolog 2 (380 aa).

The Nuclear localization signal motif lies at 8-12 (RKRKH). The interaction with MLH1 stretch occupies residues 15–40 (VDIEEVEVRSKYFKKNERTVELVKEN). Residue K194 forms a Glycyl lysine isopeptide (Lys-Gly) (interchain with G-Cter in SUMO) linkage. Positions 228 to 252 (FDSDIPYDIEGILSLPGVGPKMGYL) constitute a HhH domain. The active-site Nucleophile; for N-glycosylase activity is K248. [4Fe-4S] cluster contacts are provided by C319, C326, C329, and C335. The Nuclear localization signal motif lies at 376–380 (RHKKK).

It belongs to the Nth/MutY family. As to quaternary structure, interacts with MLH1. [4Fe-4S] cluster serves as cofactor. Post-translationally, monosumoylated.

The protein resides in the nucleus. The enzyme catalyses 2'-deoxyribonucleotide-(2'-deoxyribose 5'-phosphate)-2'-deoxyribonucleotide-DNA = a 3'-end 2'-deoxyribonucleotide-(2,3-dehydro-2,3-deoxyribose 5'-phosphate)-DNA + a 5'-end 5'-phospho-2'-deoxyribonucleoside-DNA + H(+). Bifunctional DNA N-glycosylase with associated apurinic/apyrimidinic (AP) lyase function that catalyzes the first step in base excision repair (BER), the primary repair pathway for the repair of oxidative DNA damage. The DNA N-glycosylase activity releases the damaged DNA base from DNA by cleaving the N-glycosidic bond, leaving an AP site. The AP-lyase activity cleaves the phosphodiester bond 3' to the AP site by a beta-elimination. Primarily recognizes and repairs oxidative base damage of pyrimidines, but also purine-derived lesions, alkylation damage as well as abasic sites. Can also repair the oxidation products of 8-oxoguanine. In Saccharomyces cerevisiae (strain ATCC 204508 / S288c) (Baker's yeast), this protein is Endonuclease III homolog 2 (NTG2).